Here is a 198-residue protein sequence, read N- to C-terminus: dTTP/UTP pyrophosphatase (198 aa).

Asp-75 acts as the Proton acceptor in catalysis.

This sequence belongs to the Maf family. YhdE subfamily. Requires a divalent metal cation as cofactor.

The protein localises to the cytoplasm. It catalyses the reaction dTTP + H2O = dTMP + diphosphate + H(+). It carries out the reaction UTP + H2O = UMP + diphosphate + H(+). Its function is as follows. Nucleoside triphosphate pyrophosphatase that hydrolyzes dTTP and UTP. May have a dual role in cell division arrest and in preventing the incorporation of modified nucleotides into cellular nucleic acids. This is dTTP/UTP pyrophosphatase from Wolbachia sp. subsp. Brugia malayi (strain TRS).